A 339-amino-acid chain; its full sequence is Enhancer of mRNA-decapping protein 1 (339 aa).

Disordered regions lie at residues 1–240 and 309–339; these read MMMH…PPRY and FPVNAQPPAHVGSAPQGQKISFDDLLGSAKK. Over residues 13-25 the composition is skewed to polar residues; the sequence is SPGSENHSNPASR. Composition is skewed to basic and acidic residues over residues 26–38 and 91–100; these read EQSKPKKETERRL and DNKEKNKKLL. Over residues 111-131 the composition is skewed to low complexity; sequence NFSFYSESNSNSNSNVSSNSN. Residues 163–173 are compositionally biased toward basic and acidic residues; it reads RPDKNGKKGPV. The span at 196-212 shows a compositional bias: polar residues; the sequence is FQRTSPKQQANTINDEN. Low complexity predominate over residues 213 to 237; that stretch reads SSPSSSASSVSMSSPRPVAGAVAAP.

This sequence belongs to the EDC family.

Its subcellular location is the cytoplasm. MRNA-binding protein which stimulates mRNA decapping. This chain is Enhancer of mRNA-decapping protein 1 (EDC1), found in Scheffersomyces stipitis (strain ATCC 58785 / CBS 6054 / NBRC 10063 / NRRL Y-11545) (Yeast).